We begin with the raw amino-acid sequence, 476 residues long: Bifunctional protein HldE (476 aa).

Residues 1–319 (MKVSLPAFEK…EALALHHGES (319 aa)) form a ribokinase region. 195-198 (NMSE) is a binding site for ATP. Residue Asp-264 is part of the active site. The segment at 345–476 (MTNGCFDILH…AIIQNIMANQ (132 aa)) is cytidylyltransferase.

The protein in the N-terminal section; belongs to the carbohydrate kinase PfkB family. It in the C-terminal section; belongs to the cytidylyltransferase family. As to quaternary structure, homodimer.

It carries out the reaction D-glycero-beta-D-manno-heptose 7-phosphate + ATP = D-glycero-beta-D-manno-heptose 1,7-bisphosphate + ADP + H(+). The enzyme catalyses D-glycero-beta-D-manno-heptose 1-phosphate + ATP + H(+) = ADP-D-glycero-beta-D-manno-heptose + diphosphate. It functions in the pathway nucleotide-sugar biosynthesis; ADP-L-glycero-beta-D-manno-heptose biosynthesis; ADP-L-glycero-beta-D-manno-heptose from D-glycero-beta-D-manno-heptose 7-phosphate: step 1/4. The protein operates within nucleotide-sugar biosynthesis; ADP-L-glycero-beta-D-manno-heptose biosynthesis; ADP-L-glycero-beta-D-manno-heptose from D-glycero-beta-D-manno-heptose 7-phosphate: step 3/4. In terms of biological role, catalyzes the phosphorylation of D-glycero-D-manno-heptose 7-phosphate at the C-1 position to selectively form D-glycero-beta-D-manno-heptose-1,7-bisphosphate. Its function is as follows. Catalyzes the ADP transfer from ATP to D-glycero-beta-D-manno-heptose 1-phosphate, yielding ADP-D-glycero-beta-D-manno-heptose. In Shewanella baltica (strain OS155 / ATCC BAA-1091), this protein is Bifunctional protein HldE.